The sequence spans 538 residues: MFRRNLITSAILLMAPLAFSAQSLAESLTVEQRLELLEKALRETQSELKKYKDEEKKKYTPATVNRSVSTNDQGYAANPFPTSSAAKPDAVLVKNEEKNASETGSIYSSMTLKDFSKFVKDEIGFSYNGYYRSGWGTASHGSPKSWAIGSLGRFGNEYSGWFDLQLKQRVYNENGKRVDAVVMMDGNVGQQYSTGWFGDNAGGENFMQFSDMYVTTKGFLPFAPEADFWVGKHGAPKIEIQILDWKTQRTDAAAGVGLENWKVGPGKIDIALVREDVDDYDRSLQNKQQINTNTIDLRYKDIPLWDKATLMVSGRYVTANESASEKDNQDNNGYYDWKDTWMFGTSLTQKFDKGGFNEFSFLVANNSIASNFGRYAGASPFTTFNGRYYGDHTGGTAVRLTSQGEAYIGDHFIVANAIVYSFGNDIYSYETGAHSDFESIRAVVRPAYIWDQYNQTGVELGYFTQQNKDANSNKFNESGYKTTLFHTFKVNTSMLTSRPEIRFYATYIKALENELDGFTFGDNKDDQFAVGAQAEIWW.

A signal peptide spans 1–25 (MFRRNLITSAILLMAPLAFSAQSLA). The tract at residues 52–82 (KDEEKKKYTPATVNRSVSTNDQGYAANPFPT) is disordered. Positions 62 to 73 (ATVNRSVSTNDQ) are enriched in polar residues.

It belongs to the porin LamB (TC 1.B.3) family.

Its subcellular location is the cell outer membrane. May be a sugar porin with a broad carbohydrate specificity. This chain is Putative outer membrane porin BglH (bglH), found in Escherichia coli O139:H28 (strain E24377A / ETEC).